The primary structure comprises 150 residues: Large ribosomal subunit protein bL9 (150 aa).

This sequence belongs to the bacterial ribosomal protein bL9 family.

Functionally, binds to the 23S rRNA. This is Large ribosomal subunit protein bL9 from Saccharopolyspora erythraea (strain ATCC 11635 / DSM 40517 / JCM 4748 / NBRC 13426 / NCIMB 8594 / NRRL 2338).